A 795-amino-acid chain; its full sequence is MKFSELWLREWVNPAIDSDALANQITMAGLEVDGVEPVAGSFHGVVVGEVVECAQHPNADKLRVTKVNVGGDRLLDIVCGAPNCRQGLRVAVATIGAVLPGDFKIKAAKLRGEPSEGMLCSFSELGISDDHNGIIELPADAPIGTDIREYLKLDDNTIEISVTPNRADCLGIIGVARDVAVLNQLPLVEPEIVPVGATIDDTLPITVEAPEACPRYLGRVVKGINVKAPTPLWMKEKLRRCGIRSIDAVVDVTNYVLLELGQPMHAFDKDRIEGGIVVRMAKEGETLVLLDGTEAKLNADTLVIADHNKALAMGGIFGGEHSGVNDETQNVLLECAFFSPLSITGRARRHGLHTDASHRYERGVDPALQYKAMERATRLLIDICGGEAGPVIDITNEATLPKRATITLRRSKLDRLIGHHIADEQVTDILRRLGCEVTEGKDEWQAVAPSWRFDMEIEEDLVEEVARVYGYNNIPDEPVQASLIMGTHREADLSLKRVKTLLNDKGYQEVITYSFVDPKVQQMIHPGVEALLLPSPISVEMSAMRLSLWTGLLATVVYNQNRQQNRVRIFESGLRFVPDTQAPLGIRQDLMLAGVICGNRYEEHWNLAKETVDFYDLKGDLESVLDLTGKLNEVEFRAEANPALHPGQSAAIYLKGERIGFVGVVHPELERKLDLNGRTLVFELEWNKLADRVVPQAREISRFPANRRDIAVVVAENVPAADILSECKKVGVNQVVGVNLFDVYRGKGVAEGYKSLAISLILQDTSRTLEEEEIAATVAKCVEALKERFQASLRD.

Positions 39-148 (AGSFHGVVVG…ADAPIGTDIR (110 aa)) constitute a tRNA-binding domain. The 76-residue stretch at 401-476 (PKRATITLRR…RVYGYNNIPD (76 aa)) folds into the B5 domain. 4 residues coordinate Mg(2+): Asp-454, Asp-460, Glu-463, and Glu-464. Residues 701 to 794 (SRFPANRRDI…LKERFQASLR (94 aa)) enclose the FDX-ACB domain.

This sequence belongs to the phenylalanyl-tRNA synthetase beta subunit family. Type 1 subfamily. In terms of assembly, tetramer of two alpha and two beta subunits. The cofactor is Mg(2+).

Its subcellular location is the cytoplasm. The enzyme catalyses tRNA(Phe) + L-phenylalanine + ATP = L-phenylalanyl-tRNA(Phe) + AMP + diphosphate + H(+). The chain is Phenylalanine--tRNA ligase beta subunit from Escherichia coli O157:H7.